A 541-amino-acid chain; its full sequence is Chaperonin GroEL 2 (541 aa).

ATP contacts are provided by residues 30–33 (TLGP), Lys51, 87–91 (DGTTT), Gly414, and Asp495.

The protein belongs to the chaperonin (HSP60) family. Forms a cylinder of 14 subunits composed of two heptameric rings stacked back-to-back. Interacts with the co-chaperonin GroES.

The protein localises to the cytoplasm. It catalyses the reaction ATP + H2O + a folded polypeptide = ADP + phosphate + an unfolded polypeptide.. In terms of biological role, together with its co-chaperonin GroES, plays an essential role in assisting protein folding. The GroEL-GroES system forms a nano-cage that allows encapsulation of the non-native substrate proteins and provides a physical environment optimized to promote and accelerate protein folding. The protein is Chaperonin GroEL 2 of Cereibacter sphaeroides (Rhodobacter sphaeroides).